The sequence spans 156 residues: ATP synthase subunit b (156 aa).

The helical transmembrane segment at Leu7 to Pro27 threads the bilayer.

The protein belongs to the ATPase B chain family. F-type ATPases have 2 components, F(1) - the catalytic core - and F(0) - the membrane proton channel. F(1) has five subunits: alpha(3), beta(3), gamma(1), delta(1), epsilon(1). F(0) has three main subunits: a(1), b(2) and c(10-14). The alpha and beta chains form an alternating ring which encloses part of the gamma chain. F(1) is attached to F(0) by a central stalk formed by the gamma and epsilon chains, while a peripheral stalk is formed by the delta and b chains.

Its subcellular location is the cell inner membrane. In terms of biological role, f(1)F(0) ATP synthase produces ATP from ADP in the presence of a proton or sodium gradient. F-type ATPases consist of two structural domains, F(1) containing the extramembraneous catalytic core and F(0) containing the membrane proton channel, linked together by a central stalk and a peripheral stalk. During catalysis, ATP synthesis in the catalytic domain of F(1) is coupled via a rotary mechanism of the central stalk subunits to proton translocation. Functionally, component of the F(0) channel, it forms part of the peripheral stalk, linking F(1) to F(0). This is ATP synthase subunit b from Verminephrobacter eiseniae (strain EF01-2).